We begin with the raw amino-acid sequence, 195 residues long: Interferon omega-2 (195 aa).

Positions Met-1–Gly-23 are cleaved as a signal peptide. Intrachain disulfides connect Cys-24–Cys-122 and Cys-52–Cys-162. N-linked (GlcNAc...) asparagine glycosylation is present at Asn-101.

Belongs to the alpha/beta interferon family.

The protein resides in the secreted. The protein is Interferon omega-2 of Equus caballus (Horse).